The primary structure comprises 166 residues: Small ribosomal subunit protein uS5 (166 aa).

The region spanning 11–74 (LEDRVVAINR…EDAKKNLVEV (64 aa)) is the S5 DRBM domain.

The protein belongs to the universal ribosomal protein uS5 family. In terms of assembly, part of the 30S ribosomal subunit. Contacts proteins S4 and S8.

Its function is as follows. With S4 and S12 plays an important role in translational accuracy. In terms of biological role, located at the back of the 30S subunit body where it stabilizes the conformation of the head with respect to the body. In Enterococcus faecalis (strain ATCC 700802 / V583), this protein is Small ribosomal subunit protein uS5.